A 95-amino-acid polypeptide reads, in one-letter code: UPF0358 protein BCE_3996 (95 aa).

This sequence belongs to the UPF0358 family.

This is UPF0358 protein BCE_3996 from Bacillus cereus (strain ATCC 10987 / NRS 248).